The chain runs to 156 residues: Small ribosomal subunit protein uS7 (156 aa).

This sequence belongs to the universal ribosomal protein uS7 family. In terms of assembly, part of the 30S ribosomal subunit. Contacts proteins S9 and S11.

In terms of biological role, one of the primary rRNA binding proteins, it binds directly to 16S rRNA where it nucleates assembly of the head domain of the 30S subunit. Is located at the subunit interface close to the decoding center, probably blocks exit of the E-site tRNA. This is Small ribosomal subunit protein uS7 from Brevibacillus brevis (strain 47 / JCM 6285 / NBRC 100599).